An 881-amino-acid chain; its full sequence is Tyrosine-protein kinase receptor TYRO3 (881 aa).

Residues 1-28 (MVNPGPPGLIAGLLLAALSLSSVDGTKA) form the signal peptide. Ig-like C2-type domains are found at residues 29–114 (LGFV…KSVS) and 125–206 (PYFT…AIVE). Topologically, residues 29 to 414 (LGFVGHGYNM…QRHPHTRMSW (386 aa)) are extracellular. N-linked (GlcNAc...) asparagine glycosylation is found at asparagine 37 and asparagine 49. Residues cysteine 50 and cysteine 103 are joined by a disulfide bond. Asparagine 143 is a glycosylation site (N-linked (GlcNAc...) asparagine). Cysteine 146 and cysteine 189 are disulfide-bonded. 2 Fibronectin type-III domains span residues 213-306 (PPFN…TKEK) and 311-401 (IPQN…SKEE). Residues asparagine 216, asparagine 279, asparagine 351, and asparagine 365 are each glycosylated (N-linked (GlcNAc...) asparagine). Residues 415 to 435 (VPMVLGILTALVTVVAMTLIF) traverse the membrane as a helical segment. Over 436-881 (LRKGRKETRF…MQEEQVVITL (446 aa)) the chain is Cytoplasmic. The region spanning 503-774 (FTLGRTLGKG…VDLKRRLEAI (272 aa)) is the Protein kinase domain. ATP is bound by residues 509 to 517 (LGKGEFGSV) and lysine 535. Aspartate 640 (proton acceptor) is an active-site residue. Residue tyrosine 671 is modified to Phosphotyrosine; by autocatalysis. Positions 846 to 881 (EWSSSAQNGEARGLLHEEEEEEEEEEMQEEQVVITL) are disordered. Residues 862 to 874 (EEEEEEEEEEMQE) are compositionally biased toward acidic residues.

Belongs to the protein kinase superfamily. Tyr protein kinase family. AXL/UFO subfamily. Post-translationally, tyrosine phosphorylated upon receptor stimulation.

The protein resides in the cell membrane. It carries out the reaction L-tyrosyl-[protein] + ATP = O-phospho-L-tyrosyl-[protein] + ADP + H(+). Functionally, may be involved in cell adhesion processes, particularly in the central nervous system. The polypeptide is Tyrosine-protein kinase receptor TYRO3 (tyro3) (Xenopus tropicalis (Western clawed frog)).